Consider the following 181-residue polypeptide: Putative manganese efflux pump MntP (181 aa).

The next 6 helical transmembrane spans lie at leucine 3–alanine 23, isoleucine 42–isoleucine 62, serine 63–lysine 83, leucine 101–phenylalanine 121, isoleucine 124–alanine 144, and leucine 160–isoleucine 180.

It belongs to the MntP (TC 9.B.29) family.

The protein localises to the cell inner membrane. Probably functions as a manganese efflux pump. The protein is Putative manganese efflux pump MntP of Campylobacter fetus subsp. fetus (strain 82-40).